A 250-amino-acid chain; its full sequence is Putative inactive flavonol synthase 2 (250 aa).

A Fe2OG dioxygenase domain is found at 171–250 (TEYVMRINNY…EQWKVQECVA (80 aa)). Residues His-195 and Asp-197 each contribute to the Fe cation site.

The protein belongs to the iron/ascorbate-dependent oxidoreductase family.

The sequence is that of Putative inactive flavonol synthase 2 (FLS2) from Arabidopsis thaliana (Mouse-ear cress).